Reading from the N-terminus, the 218-residue chain is MAEITAKLVKELRDKTSAGMMDCKKALIENKGDMDKSIEWLRQKGIASAEKKSGRVAAEGAVGSYIHTGSRVGVLLELNCETDFVARGDLFQGLLRDLSMQVAACPSVEYVSVDQIPESIANKEKEIEMGRDDLSGKPDQIKAKIVEGRIGKRLKEMALLEQPFIKDSSINVEELVKQVAGKIGENIRVRRFTRYILGEGIEVQGPDFAEEVASMTLG.

Residues 82-85 are involved in Mg(2+) ion dislocation from EF-Tu; that stretch reads TDFV.

The protein belongs to the EF-Ts family.

It is found in the cytoplasm. Its function is as follows. Associates with the EF-Tu.GDP complex and induces the exchange of GDP to GTP. It remains bound to the aminoacyl-tRNA.EF-Tu.GTP complex up to the GTP hydrolysis stage on the ribosome. This Prochlorococcus marinus (strain NATL1A) protein is Elongation factor Ts.